Consider the following 149-residue polypeptide: Transcriptional repressor NrdR (149 aa).

Residues 3 to 34 (CPFCSHQETQVVETRVSEDGDFIRRRRQCGAC) fold into a zinc finger. The ATP-cone domain maps to 49–139 (PTVVKKDGRR…VYRSFEDIDE (91 aa)).

The protein belongs to the NrdR family. Requires Zn(2+) as cofactor.

Its function is as follows. Negatively regulates transcription of bacterial ribonucleotide reductase nrd genes and operons by binding to NrdR-boxes. This Acidovorax sp. (strain JS42) protein is Transcriptional repressor NrdR.